The following is a 169-amino-acid chain: MASFQDRAQHTIAQLDKELSKYPVLNNLERQTSVPKVYVILGLVGIYTFLVFFNIAGEFLVNFAGFLIPGYYSLNALFTSGKADDTQWLTYWVVYALLTVVESAINAAYWFPFYYIFKFVLILWMSLPQTNGAQVVFHSFLQPVLGRFFTSGSTSANLRAQADAASKSQ.

The Cytoplasmic portion of the chain corresponds to 1–35 (MASFQDRAQHTIAQLDKELSKYPVLNNLERQTSVP). A helical membrane pass occupies residues 36-55 (KVYVILGLVGIYTFLVFFNI). A topological domain (lumenal) is located at residue A56. The chain crosses the membrane as a helical span at residues 57-76 (GEFLVNFAGFLIPGYYSLNA). Residues 77–86 (LFTSGKADDT) are Cytoplasmic-facing. A helical transmembrane segment spans residues 87–103 (QWLTYWVVYALLTVVES). The Lumenal segment spans residues 104 to 105 (AI). The helical transmembrane segment at 106–124 (NAAYWFPFYYIFKFVLILW) threads the bilayer. At 125-169 (MSLPQTNGAQVVFHSFLQPVLGRFFTSGSTSANLRAQADAASKSQ) the chain is on the cytoplasmic side.

Belongs to the DP1 family. As to quaternary structure, oligomer.

It localises to the endoplasmic reticulum membrane. It is found in the golgi apparatus membrane. Functionally, required to generate and maintain the structure of the tubular endoplasmic reticulum network and the vacuole. Induces high curvature in membranes and causes membrane tubule formation. Involved in membrane/vesicle trafficking. This Aspergillus fumigatus (strain ATCC MYA-4609 / CBS 101355 / FGSC A1100 / Af293) (Neosartorya fumigata) protein is Protein yop1 (yop1).